A 656-amino-acid polypeptide reads, in one-letter code: Chromosomal replication initiator protein DnaA (656 aa).

Residues 1–100 (MADVPADLAA…TAGEPAGPAP (100 aa)) form a domain I, interacts with DnaA modulators region. The tract at residues 91–313 (TAGEPAGPAP…PAPATGPGEP (223 aa)) is disordered. A compositionally biased stretch (pro residues) spans 97–109 (GPAPQAPQSPPSR). The domain II stretch occupies residues 101-315 (QAPQSPPSRP…PATGPGEPTA (215 aa)). 2 stretches are compositionally biased toward basic and acidic residues: residues 126–144 (GREEYRDRDEYEGYGRNRA) and 231–273 (QRGD…RDLP). The span at 291-313 (GPATGAPGPLAAQPAPATGPGEP) shows a compositional bias: low complexity. The tract at residues 316 to 532 (RLNPKYLFDT…GALIRVTAFA (217 aa)) is domain III, AAA+ region. Residues Gly360, Gly362, Lys363, and Thr364 each coordinate ATP. The domain IV, binds dsDNA stretch occupies residues 533–656 (SLNRQPVDLG…TELTNRIKNG (124 aa)).

This sequence belongs to the DnaA family. Oligomerizes as a right-handed, spiral filament on DNA at oriC.

The protein localises to the cytoplasm. In terms of biological role, plays an essential role in the initiation and regulation of chromosomal replication. ATP-DnaA binds to the origin of replication (oriC) to initiate formation of the DNA replication initiation complex once per cell cycle. Binds the DnaA box (a 9 base pair repeat at the origin) and separates the double-stranded (ds)DNA. Forms a right-handed helical filament on oriC DNA; dsDNA binds to the exterior of the filament while single-stranded (ss)DNA is stabiized in the filament's interior. The ATP-DnaA-oriC complex binds and stabilizes one strand of the AT-rich DNA unwinding element (DUE), permitting loading of DNA polymerase. After initiation quickly degrades to an ADP-DnaA complex that is not apt for DNA replication. Binds acidic phospholipids. This chain is Chromosomal replication initiator protein DnaA, found in Streptomyces coelicolor (strain ATCC BAA-471 / A3(2) / M145).